Consider the following 710-residue polypeptide: Early transcription factor 82 kDa subunit (710 aa).

This sequence belongs to the poxviridae VETF large subunit family. As to quaternary structure, heterodimer of a 70 kDa and a 82 kDa subunit. Part of the early transcription complex composed of ETF, RAP94/OPG109, and the DNA-directed RNA polymerase.

The protein resides in the virion. Acts with RNA polymerase to initiate transcription from early gene promoters. Is recruited by the RPO-associated protein of 94 kDa RAP94/OPG109 to form the early transcription complex, which also contains the core RNA polymerase. ETF heterodimer binds to early gene promoters. The protein is Early transcription factor 82 kDa subunit (OPG133) of Homo sapiens (Human).